The primary structure comprises 163 residues: Nucleotide-binding protein Noca_0564 (163 aa).

The protein belongs to the YajQ family.

In terms of biological role, nucleotide-binding protein. The sequence is that of Nucleotide-binding protein Noca_0564 from Nocardioides sp. (strain ATCC BAA-499 / JS614).